The chain runs to 267 residues: 4-hydroxy-tetrahydrodipicolinate reductase (267 aa).

Residues 8–13 (GIAGRM), Glu34, 98–100 (GST), and 122–125 (SPNM) each bind NAD(+). His155 serves as the catalytic Proton donor/acceptor. His156 lines the (S)-2,3,4,5-tetrahydrodipicolinate pocket. The Proton donor role is filled by Lys159. Position 165–166 (165–166 (GT)) interacts with (S)-2,3,4,5-tetrahydrodipicolinate.

It belongs to the DapB family.

Its subcellular location is the cytoplasm. The enzyme catalyses (S)-2,3,4,5-tetrahydrodipicolinate + NAD(+) + H2O = (2S,4S)-4-hydroxy-2,3,4,5-tetrahydrodipicolinate + NADH + H(+). The catalysed reaction is (S)-2,3,4,5-tetrahydrodipicolinate + NADP(+) + H2O = (2S,4S)-4-hydroxy-2,3,4,5-tetrahydrodipicolinate + NADPH + H(+). Its pathway is amino-acid biosynthesis; L-lysine biosynthesis via DAP pathway; (S)-tetrahydrodipicolinate from L-aspartate: step 4/4. In terms of biological role, catalyzes the conversion of 4-hydroxy-tetrahydrodipicolinate (HTPA) to tetrahydrodipicolinate. In Syntrophobacter fumaroxidans (strain DSM 10017 / MPOB), this protein is 4-hydroxy-tetrahydrodipicolinate reductase.